Reading from the N-terminus, the 494-residue chain is Cytochrome P450 2A8 (494 aa).

Cys-439 provides a ligand contact to heme.

It belongs to the cytochrome P450 family. Heme serves as cofactor. As to expression, liver.

It is found in the endoplasmic reticulum membrane. Its subcellular location is the microsome membrane. The catalysed reaction is an organic molecule + reduced [NADPH--hemoprotein reductase] + O2 = an alcohol + oxidized [NADPH--hemoprotein reductase] + H2O + H(+). In terms of biological role, highly active in 7-ethoxycoumarin O-deethylation, and benzphetamine N-demethylation; moderately active in testosterone 7-alpha-hydroxylation, ethylmorphine N-demethylation, p-nitroanisole O-demethylation; and only slightly active in benzopyrene 3-hydroxylation, 7-ethoxyresorufin O-deethylation, testosterone 2-alpha-hydroxylation and testosterone 17-oxidation. Competent in the metabolic activation of aflatoxin B1. The sequence is that of Cytochrome P450 2A8 (CYP2A8) from Mesocricetus auratus (Golden hamster).